The sequence spans 645 residues: Crossover junction endonuclease mus-81 (645 aa).

Disordered stretches follow at residues 98–119 (LAAA…RTAR) and 219–310 (GVAG…EDRK). Polar residues predominate over residues 223–252 (SANTSRNAIASGSGTSNPNRSENVNPNRQD). A compositionally biased stretch (acidic residues) spans 296–305 (DSDDEDPKYD). The region spanning 353–459 (ELVLDTREVQ…NVVYIIENYN (107 aa)) is the ERCC4 domain.

Belongs to the XPF family. Interacts with eme-1. Mg(2+) is required as a cofactor.

The protein resides in the nucleus. In terms of biological role, interacts with eme-1 to form a DNA structure-specific endonuclease with substrate preference for branched DNA structures with a 5'-end at the branch nick. Typical substrates include 3'-flap structures, D-loops, replication forks and nicked Holliday junctions. May be required in mitosis for the processing of stalled or collapsed replication fork intermediates. May be required in meiosis for the repair of meiosis-specific double strand breaks subsequent to single-end invasion (SEI). This is Crossover junction endonuclease mus-81 (mus-81) from Neurospora crassa (strain ATCC 24698 / 74-OR23-1A / CBS 708.71 / DSM 1257 / FGSC 987).